A 75-amino-acid chain; its full sequence is Exodeoxyribonuclease 7 small subunit (75 aa).

This sequence belongs to the XseB family. Heterooligomer composed of large and small subunits.

The protein resides in the cytoplasm. It catalyses the reaction Exonucleolytic cleavage in either 5'- to 3'- or 3'- to 5'-direction to yield nucleoside 5'-phosphates.. Functionally, bidirectionally degrades single-stranded DNA into large acid-insoluble oligonucleotides, which are then degraded further into small acid-soluble oligonucleotides. This is Exodeoxyribonuclease 7 small subunit from Elusimicrobium minutum (strain Pei191).